We begin with the raw amino-acid sequence, 492 residues long: Adenosylhomocysteinase (492 aa).

Residues Thr68, Asp153, and Glu215 each coordinate substrate. 216 to 218 (TTT) lines the NAD(+) pocket. Residues Lys245 and Asp249 each coordinate substrate. NAD(+)-binding positions include Asn250, 279–284 (GYGDVG), Glu302, Asn337, 358–360 (IGH), and Asn406.

It belongs to the adenosylhomocysteinase family. The cofactor is NAD(+).

The protein localises to the cytoplasm. The enzyme catalyses S-adenosyl-L-homocysteine + H2O = L-homocysteine + adenosine. Its pathway is amino-acid biosynthesis; L-homocysteine biosynthesis; L-homocysteine from S-adenosyl-L-homocysteine: step 1/1. May play a key role in the regulation of the intracellular concentration of adenosylhomocysteine. This is Adenosylhomocysteinase from Mycobacterium ulcerans (strain Agy99).